The primary structure comprises 156 residues: Large ribosomal subunit protein bL9 (156 aa).

The protein belongs to the bacterial ribosomal protein bL9 family.

Binds to the 23S rRNA. In Treponema pallidum (strain Nichols), this protein is Large ribosomal subunit protein bL9.